We begin with the raw amino-acid sequence, 207 residues long: Outer-membrane lipoprotein LolB (207 aa).

An N-terminal signal peptide occupies residues 1 to 21 (MPLPDFRLIRLLPLAALVLTA). The N-palmitoyl cysteine moiety is linked to residue cysteine 22. Cysteine 22 carries the S-diacylglycerol cysteine lipid modification.

The protein belongs to the LolB family. Monomer.

The protein resides in the cell outer membrane. Plays a critical role in the incorporation of lipoproteins in the outer membrane after they are released by the LolA protein. The sequence is that of Outer-membrane lipoprotein LolB from Escherichia coli (strain K12 / MC4100 / BW2952).